Here is a 2021-residue protein sequence, read N- to C-terminus: MELEERGLQLLDVAELEEPQRGLRVLEWLRHLRRVLPVITRAEIKENQKQLVEQLLLVMMGFPGPPARRLLAYNMAFVYSSGDTFSVYETIDRCNDVIRSKDDSPSYLPSKLAAVACLGALYQKLGRLLGSTFSDTVSNLLKVLRSAESQGRSEIMLSLERILKGLGSAAIPCHRDIYKAARSCLTDRSMSVRCSAAQCLLALQKEASFMWGSDLESLASICFKAFEGSSYEVRLAVARLLGKVLARAMQGATSPRQNARKLSLQEVLGLLSTGFLRGNSGFLRGGGDMLGGTSVTTRHVRLGATQAYIVFIRTLGGHWLARNVPVLLSHSLELISNPKAIQNPTDAACSRCCISYILRATVGELLGEKAQLEAAREICEVIRKLMKTVDAVLSDSNLETRFCTTDISASQHVLVCALQELGDLFLGLGTILAPLLKDSSAGVLDTVLSVSLHPSLSARLAAAWCLRSVIVSLPSLAAPVLDRCVERLTALKSSPEAVSGYSLTAAVLLGSIRLCPLGVPHGKGKVVMSLAKDLLCTASQNSRFSLQRTQAGWLLIASLMTLGPAVVQSQLGCLLLLWRSVFPVTPKDLDTERRRGDAFTWQVTLEGRAGALGAMRSFVSHCGELMSEEVLQRLLPPLPCAIALLTLLPSLQKLYGNSLKACSVLYRQRLYQLLVLLPPKTYEESFCAVMKELVADLTSPDYSPGGAAFLLSSVCHPDDLVLLGPSFQECDQRATEEELLLSSGIPGGSLEYDLHAIYELPSEGESVPKPLPSAFTVIQAASLLFGTLLAHMPESQRPQILQQLVESIKQTKGSRQQSVQLCAMSSLCNFLKHLASSRSNLGPEEMRKPCLSLIQAVLEGNSLWLRCAGVESVARLVQVVDDPTFTAGLIQASFDKLKTARDVVARTSHSLVLGTLHRYLGGINSSQHLASCVGVLHSLSQDTTSPEVQTWALHSLSVITDLSGPLFNVHIEATLSLLLTALITTSPSHPEVHRSLGRCLSALVTALGPELQGNGAVLSSQRTSCLLACSVMQENPDCLVQAQGISCLQQLHMYAPKHVNLSSLVPTLCVHLYSPHLPLRRAVLACLRQLAQREAAEVSEHAMTVAKEGHEDLKMEMNMRELGLEGVLLSLLDRESDQQLLRDVKETLLHMQNCTGLSRLSFWLRMLKDILSASADFAAVASVDTNQEDEGEVACSDSVLTSSKAESLGSSVTPHWKTRIFAMECVCQLITQCELDGGAHFDMAQAQEMKHKEPERDFLVLHLQDLIRMSFMAATDHSEQLRLVGLQALLLVIHRFAAVPEPEFPGHLILEQFQANVLAAVRPAFNTDTPPDVTARACEVCSAWLASGVVKELADLQRVQQLLLTSLRRVQVAKETASVYSESTTAMESLAVLKAWAEVYIAAMEKQVTQSKMAEAQNEVLLSLVQAELLTLSGLWLAALQDHALLTLPAACASQLPSQGGGFYTAETSDAARPHYLLSWAPILHASSLWLSSSGFVLPDQDEGNGHLSRPVTPTSMGQERGSQLPADSPEDLNLERFHLILGISVEFLCCPPVDAPMERITSCLRALKALLSGMWPKAHIGTDQDLAIELISVLHRLLLMRESSEVQLLVLEVGRLIVNAAQDHVRERRRSAEVDDGAEEKETLPVFGEGHDTGGLVPGHSLVVAALELCLCILIRQLPQLSPHLSGGSVVGKTEPLFSEARLLVASSLGILAELPSLCSPEGSVSVLPTLLYLVVGVLQDTTVKFPDGHLTLPVTAALQALKVIVSSPMSQVEKCRASWTRLMQSAVSTLLNSWHLERQLVPDSVSLLTALTIFLLSANPEVMSDPGLQNACVQRFQNSIDSKNPTEQLKCYRLLLSIFKHPVPEVVAPYVCSLAPRIMRHLSQAESRKPQSMEELLVLQEGVNLLKTLVSAVEEQNRPSMVCMLLHLLISFLLDENALGSAPHYSRALHDFGLHSLTSFGASYPTQFRKLMGSSPALRSRLEAALRGNQESLKPKAPSRGTMGGGHGSPSIQLKTNFL.

HEAT repeat units follow at residues 795–836 (SQRP…HLAS) and 1059–1096 (VNLS…REAA). 2 disordered regions span residues 1503-1528 (EGNG…LPAD) and 1989-2012 (RGNQ…HGSP). Over residues 1512–1522 (VTPTSMGQERG) the composition is skewed to polar residues.

Belongs to the HEATR5 family.

The sequence is that of HEAT repeat-containing protein 5A (heatr5a) from Xenopus tropicalis (Western clawed frog).